The following is a 298-amino-acid chain: Heme A synthase (298 aa).

At 1–6 (MHRSLK) the chain is on the cytoplasmic side. A helical transmembrane segment spans residues 7-27 (IFGTLTSIGMVIVLMQGALVT). Residues 28-62 (KTESGEGCGATWPLCFGEVIPTNPAIETIIEYSHR) are Extracellular-facing. An intrachain disulfide couples cysteine 35 to cysteine 42. Glutamate 58 is a catalytic residue. Residue histidine 61 coordinates heme o. Residues 63 to 83 (IVSGLLGAMVIILAIWAWRKL) traverse the membrane as a helical segment. Residues 84–92 (SHIRETKVM) are Cytoplasmic-facing. A helical membrane pass occupies residues 93 to 113 (AILAVLFIIFQGLLGAGAVVF). The Extracellular segment spans residues 114–117 (GQSH). A helical membrane pass occupies residues 118 to 138 (AILALHFGISAISLATVVLLT). A heme o-binding site is contributed by histidine 123. Residues 139-158 (TLAFEDGKPNPPALIVKKGY) are Cytoplasmic-facing. Residues 159-179 (KGYILAVFAYCYAVIYTGAYV) traverse the membrane as a helical segment. Residues 180-209 (KHTQATLACGDFPLCNGQWIPMLSGPVGAH) lie on the Extracellular side of the membrane. A disulfide bridge connects residues cysteine 188 and cysteine 194. Residues 210–230 (FFHRVAGTLLLILLVVALIWT) form a helical membrane-spanning segment. A heme b-binding site is contributed by histidine 212. Topologically, residues 231-244 (LRKYSHYRSLVWTH) are cytoplasmic. Residues 245–265 (ILCVILVLTQYATGISIVLTG) form a helical membrane-spanning segment. Topologically, residues 266-271 (NELFVA) are extracellular. Residues 272–292 (MMHALIVSILFTTLCYIVMIL) form a helical membrane-spanning segment. Histidine 274 provides a ligand contact to heme b. At 293–298 (SRNKAV) the chain is on the cytoplasmic side.

Belongs to the COX15/CtaA family. Type 1 subfamily. Interacts with CtaB. It depends on heme b as a cofactor.

It is found in the cell membrane. It catalyses the reaction Fe(II)-heme o + 2 A + H2O = Fe(II)-heme a + 2 AH2. It participates in porphyrin-containing compound metabolism; heme A biosynthesis; heme A from heme O: step 1/1. Catalyzes the conversion of heme O to heme A by two successive hydroxylations of the methyl group at C8. The first hydroxylation forms heme I, the second hydroxylation results in an unstable dihydroxymethyl group, which spontaneously dehydrates, resulting in the formyl group of heme A. The protein is Heme A synthase of Halalkalibacterium halodurans (strain ATCC BAA-125 / DSM 18197 / FERM 7344 / JCM 9153 / C-125) (Bacillus halodurans).